We begin with the raw amino-acid sequence, 514 residues long: Anthranilate synthase component 1 (514 aa).

L-tryptophan is bound by residues Thr-40 and 290 to 292 (PYM). A chorismate-binding site is contributed by 327–328 (GT). Glu-360 serves as a coordination point for Mg(2+). Chorismate contacts are provided by residues Tyr-448, Arg-468, 482–484 (GAG), and Gly-484. Glu-497 is a Mg(2+) binding site.

This sequence belongs to the anthranilate synthase component I family. Heterotetramer consisting of two non-identical subunits: a beta subunit (TrpG) and a large alpha subunit (TrpE). It depends on Mg(2+) as a cofactor.

It catalyses the reaction chorismate + L-glutamine = anthranilate + pyruvate + L-glutamate + H(+). It functions in the pathway amino-acid biosynthesis; L-tryptophan biosynthesis; L-tryptophan from chorismate: step 1/5. With respect to regulation, feedback inhibited by tryptophan. Functionally, part of a heterotetrameric complex that catalyzes the two-step biosynthesis of anthranilate, an intermediate in the biosynthesis of L-tryptophan. In the first step, the glutamine-binding beta subunit (TrpG) of anthranilate synthase (AS) provides the glutamine amidotransferase activity which generates ammonia as a substrate that, along with chorismate, is used in the second step, catalyzed by the large alpha subunit of AS (TrpE) to produce anthranilate. In the absence of TrpG, TrpE can synthesize anthranilate directly from chorismate and high concentrations of ammonia. This chain is Anthranilate synthase component 1 (trpE), found in Buchnera aphidicola subsp. Rhopalosiphum padi.